We begin with the raw amino-acid sequence, 370 residues long: Anthranilate phosphoribosyltransferase (370 aa).

Residues Gly-82, 85 to 86 (GD), Thr-90, 92 to 95 (NVST), 110 to 118 (KHGNRAATS), and Ser-122 contribute to the 5-phospho-alpha-D-ribose 1-diphosphate site. Gly-82 is a binding site for anthranilate. Ser-94 is a binding site for Mg(2+). Asn-113 provides a ligand contact to anthranilate. Arg-168 is a binding site for anthranilate. Asp-226 and Glu-227 together coordinate Mg(2+).

The protein belongs to the anthranilate phosphoribosyltransferase family. In terms of assembly, homodimer. Mg(2+) serves as cofactor.

It catalyses the reaction N-(5-phospho-beta-D-ribosyl)anthranilate + diphosphate = 5-phospho-alpha-D-ribose 1-diphosphate + anthranilate. Its pathway is amino-acid biosynthesis; L-tryptophan biosynthesis; L-tryptophan from chorismate: step 2/5. Its function is as follows. Catalyzes the transfer of the phosphoribosyl group of 5-phosphorylribose-1-pyrophosphate (PRPP) to anthranilate to yield N-(5'-phosphoribosyl)-anthranilate (PRA). This is Anthranilate phosphoribosyltransferase from Methanosarcina acetivorans (strain ATCC 35395 / DSM 2834 / JCM 12185 / C2A).